A 112-amino-acid polypeptide reads, in one-letter code: Phosphoribosyl-AMP cyclohydrolase (112 aa).

Position 76 (Asp76) interacts with Mg(2+). Cys77 provides a ligand contact to Zn(2+). Mg(2+) is bound by residues Asp78 and Asp80. 2 residues coordinate Zn(2+): Cys93 and Cys100.

It belongs to the PRA-CH family. Homodimer. Requires Mg(2+) as cofactor. The cofactor is Zn(2+).

Its subcellular location is the cytoplasm. The enzyme catalyses 1-(5-phospho-beta-D-ribosyl)-5'-AMP + H2O = 1-(5-phospho-beta-D-ribosyl)-5-[(5-phospho-beta-D-ribosylamino)methylideneamino]imidazole-4-carboxamide. It functions in the pathway amino-acid biosynthesis; L-histidine biosynthesis; L-histidine from 5-phospho-alpha-D-ribose 1-diphosphate: step 3/9. Its function is as follows. Catalyzes the hydrolysis of the adenine ring of phosphoribosyl-AMP. This is Phosphoribosyl-AMP cyclohydrolase from Streptococcus thermophilus (strain ATCC BAA-491 / LMD-9).